A 285-amino-acid polypeptide reads, in one-letter code: NADPH-dependent 7-cyano-7-deazaguanine reductase (285 aa).

Residue 91-93 (IES) coordinates substrate. 93–94 (SK) provides a ligand contact to NADPH. Cys191 (thioimide intermediate) is an active-site residue. The active-site Proton donor is Asp198. 230-231 (HE) is a substrate binding site. Residue 259-260 (RG) participates in NADPH binding.

This sequence belongs to the GTP cyclohydrolase I family. QueF type 2 subfamily. Homodimer.

The protein localises to the cytoplasm. It catalyses the reaction 7-aminomethyl-7-carbaguanine + 2 NADP(+) = 7-cyano-7-deazaguanine + 2 NADPH + 3 H(+). It participates in tRNA modification; tRNA-queuosine biosynthesis. Catalyzes the NADPH-dependent reduction of 7-cyano-7-deazaguanine (preQ0) to 7-aminomethyl-7-deazaguanine (preQ1). In Legionella pneumophila (strain Paris), this protein is NADPH-dependent 7-cyano-7-deazaguanine reductase.